The following is a 467-amino-acid chain: Dihydrolipoyl dehydrogenase (467 aa).

FAD is bound by residues 33 to 41 (EPKYWGGIC), Lys50, and Gly113. Cys41 and Cys46 are joined by a disulfide. NAD(+)-binding positions include 181–185 (GAGAI), Glu204, and 269–272 (AIGF). 2 residues coordinate FAD: Asp312 and Ala320. The active-site Proton acceptor is the His446.

It belongs to the class-I pyridine nucleotide-disulfide oxidoreductase family. Homodimer. Part of the PDH complex, consisting of multiple copies of AceE (E1), DlaT (E2) and Lpd (E3), and of the BCKADH complex, consisting of multiple copies of BkdA/BkdB (E1), BkdC (E2) and Lpd (E3). FAD is required as a cofactor.

The protein localises to the cytoplasm. The catalysed reaction is N(6)-[(R)-dihydrolipoyl]-L-lysyl-[protein] + NAD(+) = N(6)-[(R)-lipoyl]-L-lysyl-[protein] + NADH + H(+). In terms of biological role, lipoamide dehydrogenase is a component of the alpha-ketoacid dehydrogenase complexes. Catalyzes the reoxidation of dihydrolipoyl groups which are covalently attached to the lipoate acyltransferase components (E2) of the complexes. This is Dihydrolipoyl dehydrogenase (lpd) from Mycobacterium leprae (strain TN).